The chain runs to 149 residues: Protegrin-3 (149 aa).

Positions 1–29 are cleaved as a signal peptide; the sequence is METQRASLCLGRWSLWLLLLALVVPSASA. Positions 30–130 are excised as a propeptide; it reads QALSYREAVL…DITCNEVQGV (101 aa). Residues 61–80 are disordered; it reads DQPPKADEDPGTPKPVSFTV. 4 cysteine pairs are disulfide-bonded: cysteine 85–cysteine 96, cysteine 107–cysteine 124, cysteine 136–cysteine 145, and cysteine 138–cysteine 143. Arginine 148 is subject to Arginine amide.

The protein belongs to the cathelicidin family.

It localises to the secreted. In terms of biological role, microbicidal activity. Active against E.coli, Listeria monocytogenes and C.albicans, in vitro. This is Protegrin-3 (NPG3) from Sus scrofa (Pig).